Reading from the N-terminus, the 320-residue chain is Cell division protein FtsQ (320 aa).

A disordered region spans residues 1–24; it reads MAQTIKRGGKGVRRATAARSAQRK. Over 1–52 the chain is Cytoplasmic; it reads MAQTIKRGGKGVRRATAARSAQRKVQTARQQTGSVLDSVLRWLPFSEETLHR. The chain crosses the membrane as a helical span at residues 53–73; that stretch reads ILMTLILAAAAGLVWTVAVMA. The Periplasmic segment spans residues 74–320; it reads GIPALVSEQA…RAASAKSDEG (247 aa). Residues 92–160 form the POTRA domain; it reads FKVSHLEVRG…DTLVIDIVER (69 aa). Residues 296–320 are disordered; the sequence is AAEKRAEEQARAEAKRAASAKSDEG.

This sequence belongs to the FtsQ/DivIB family. FtsQ subfamily.

The protein resides in the cell inner membrane. Functionally, essential cell division protein. This is Cell division protein FtsQ from Novosphingobium aromaticivorans (strain ATCC 700278 / DSM 12444 / CCUG 56034 / CIP 105152 / NBRC 16084 / F199).